A 272-amino-acid chain; its full sequence is Phosphoglycolate phosphatase (272 aa).

Asp-19 serves as the catalytic Nucleophile. Mg(2+) is bound by residues Asp-19, Asp-21, and Asp-182.

Belongs to the HAD-like hydrolase superfamily. CbbY/CbbZ/Gph/YieH family. It depends on Mg(2+) as a cofactor.

The enzyme catalyses 2-phosphoglycolate + H2O = glycolate + phosphate. It participates in organic acid metabolism; glycolate biosynthesis; glycolate from 2-phosphoglycolate: step 1/1. Specifically catalyzes the dephosphorylation of 2-phosphoglycolate. Is involved in the dissimilation of the intracellular 2-phosphoglycolate formed during the DNA repair of 3'-phosphoglycolate ends, a major class of DNA lesions induced by oxidative stress. This chain is Phosphoglycolate phosphatase, found in Pseudomonas fluorescens (strain ATCC BAA-477 / NRRL B-23932 / Pf-5).